The chain runs to 578 residues: Membrane protein insertase YidC (578 aa).

Residues 7 to 27 traverse the membrane as a helical segment; sequence FLAIAISLGILLGFQGLYRHF. The tract at residues 35 to 70 is disordered; sequence ARTATNAGQGKPNNTLGAVPTDATASQSPPPKEGAR. Polar residues predominate over residues 37-50; sequence TATNAGQGKPNNTL. 4 helical membrane-spanning segments follow: residues 362 to 382, 436 to 456, 491 to 511, and 530 to 550; these read LVGNFGVAILIFTVLVKAAFY, LPMLLQFPIFFSLYKVIFVTI, HISPFLHLGIWPLIMGGTMYL, and FMPIIFTFMLARFPVGLVIYW.

It belongs to the OXA1/ALB3/YidC family. Type 1 subfamily. In terms of assembly, interacts with the Sec translocase complex via SecD. Specifically interacts with transmembrane segments of nascent integral membrane proteins during membrane integration.

It is found in the cell inner membrane. Functionally, required for the insertion and/or proper folding and/or complex formation of integral membrane proteins into the membrane. Involved in integration of membrane proteins that insert both dependently and independently of the Sec translocase complex, as well as at least some lipoproteins. Aids folding of multispanning membrane proteins. The polypeptide is Membrane protein insertase YidC (Granulibacter bethesdensis (strain ATCC BAA-1260 / CGDNIH1)).